We begin with the raw amino-acid sequence, 608 residues long: Glutamyl-tRNA(Gln) amidotransferase subunit E (608 aa).

The protein belongs to the GatB/GatE family. GatE subfamily. As to quaternary structure, heterodimer of GatD and GatE.

The catalysed reaction is L-glutamyl-tRNA(Gln) + L-glutamine + ATP + H2O = L-glutaminyl-tRNA(Gln) + L-glutamate + ADP + phosphate + H(+). Functionally, allows the formation of correctly charged Gln-tRNA(Gln) through the transamidation of misacylated Glu-tRNA(Gln) in organisms which lack glutaminyl-tRNA synthetase. The reaction takes place in the presence of glutamine and ATP through an activated gamma-phospho-Glu-tRNA(Gln). The GatDE system is specific for glutamate and does not act on aspartate. In Pyrobaculum aerophilum (strain ATCC 51768 / DSM 7523 / JCM 9630 / CIP 104966 / NBRC 100827 / IM2), this protein is Glutamyl-tRNA(Gln) amidotransferase subunit E.